The following is a 477-amino-acid chain: Trigger factor (477 aa).

The PPIase FKBP-type domain occupies glycine 174–proline 261. Positions valine 435–lysine 477 are disordered. Residues threonine 442–threonine 470 are compositionally biased toward low complexity.

This sequence belongs to the FKBP-type PPIase family. Tig subfamily.

The protein resides in the cytoplasm. The enzyme catalyses [protein]-peptidylproline (omega=180) = [protein]-peptidylproline (omega=0). Functionally, involved in protein export. Acts as a chaperone by maintaining the newly synthesized protein in an open conformation. Functions as a peptidyl-prolyl cis-trans isomerase. The polypeptide is Trigger factor (Prochlorococcus marinus (strain MIT 9301)).